We begin with the raw amino-acid sequence, 401 residues long: LL-diaminopimelate aminotransferase (401 aa).

Substrate-binding residues include tyrosine 15 and glycine 42. Pyridoxal 5'-phosphate contacts are provided by residues tyrosine 72, 108 to 109, tyrosine 132, asparagine 176, tyrosine 207, and 235 to 237; these read AK and SFS. Substrate-binding residues include lysine 109, tyrosine 132, and asparagine 176. Lysine 238 is modified (N6-(pyridoxal phosphate)lysine). Residues arginine 246 and asparagine 281 each coordinate pyridoxal 5'-phosphate. The substrate site is built by asparagine 281 and arginine 377.

This sequence belongs to the class-I pyridoxal-phosphate-dependent aminotransferase family. LL-diaminopimelate aminotransferase subfamily. In terms of assembly, homodimer. Pyridoxal 5'-phosphate is required as a cofactor.

It catalyses the reaction (2S,6S)-2,6-diaminopimelate + 2-oxoglutarate = (S)-2,3,4,5-tetrahydrodipicolinate + L-glutamate + H2O + H(+). It participates in amino-acid biosynthesis; L-lysine biosynthesis via DAP pathway; LL-2,6-diaminopimelate from (S)-tetrahydrodipicolinate (aminotransferase route): step 1/1. In terms of biological role, involved in the synthesis of meso-diaminopimelate (m-DAP or DL-DAP), required for both lysine and peptidoglycan biosynthesis. Catalyzes the direct conversion of tetrahydrodipicolinate to LL-diaminopimelate. The sequence is that of LL-diaminopimelate aminotransferase from Azobacteroides pseudotrichonymphae genomovar. CFP2.